The sequence spans 131 residues: UPF0102 protein YraN (131 aa).

The segment covering M1–T19 has biased composition (polar residues). Positions M1 to D21 are disordered.

This sequence belongs to the UPF0102 family.

The polypeptide is UPF0102 protein YraN (Escherichia coli O45:K1 (strain S88 / ExPEC)).